Here is a 235-residue protein sequence, read N- to C-terminus: uncharacterized protein (235 aa).

This is an uncharacterized protein from Mycoplasma pneumoniae (strain ATCC 29342 / M129 / Subtype 1) (Mycoplasmoides pneumoniae).